We begin with the raw amino-acid sequence, 99 residues long: NADH dehydrogenase [ubiquinone] 1 alpha subcomplex subunit 2 (99 aa).

Residue alanine 2 is modified to N-acetylalanine. An intrachain disulfide couples cysteine 24 to cysteine 58. Lysine 64 bears the N6-acetyllysine; alternate mark. At lysine 64 the chain carries N6-succinyllysine; alternate. Position 75 is an N6-acetyllysine (lysine 75).

The protein belongs to the complex I NDUFA2 subunit family. As to quaternary structure, complex I is composed of 45 different subunits.

The protein localises to the mitochondrion inner membrane. Accessory subunit of the mitochondrial membrane respiratory chain NADH dehydrogenase (Complex I), that is believed not to be involved in catalysis. Complex I functions in the transfer of electrons from NADH to the respiratory chain. The immediate electron acceptor for the enzyme is believed to be ubiquinone. This Bos taurus (Bovine) protein is NADH dehydrogenase [ubiquinone] 1 alpha subcomplex subunit 2 (NDUFA2).